The sequence spans 176 residues: T cell receptor beta constant 1 (176 aa).

In terms of domain architecture, Ig-like C1-type spans 8-117 (PEVAVFEPSE…WTQDRAKPVT (110 aa)). C30 and C95 are joined by a disulfide. N69 is a glycosylation site (N-linked (GlcNAc...) asparagine). A connecting peptide region spans residues 130-144 (CGFTSVSYQQGVLSA). Residues 150–170 (ILLGKATLYAVLVSALVLMAM) form a helical membrane-spanning segment. Topologically, residues 171–176 (VKRKDF) are cytoplasmic.

Alpha-beta TR is a heterodimer composed of an alpha and beta chain; disulfide-linked. The alpha-beta TR is associated with the transmembrane signaling CD3 coreceptor proteins to form the TR-CD3 (TcR or TCR). The assembly of alpha-beta TR heterodimers with CD3 occurs in the endoplasmic reticulum where a single alpha-beta TR heterodimer associates with one CD3D-CD3E heterodimer, one CD3G-CD3E heterodimer and one CD247 homodimer forming a stable octameric structure. CD3D-CD3E and CD3G-CD3E heterodimers preferentially associate with TR alpha and TR beta chains, respectively. The association of the CD247 homodimer is the last step of TcR assembly in the endoplasmic reticulum and is required for transport to the cell surface.

The protein resides in the cell membrane. Functionally, constant region of T cell receptor (TR) beta chain. Alpha-beta T cell receptors are antigen specific receptors which are essential to the immune response and are present on the cell surface of T lymphocytes. Recognize peptide-major histocompatibility (MH) (pMH) complexes that are displayed by antigen presenting cells (APC), a prerequisite for efficient T cell adaptive immunity against pathogens. Binding of alpha-beta TR to pMH complex initiates TR-CD3 clustering on the cell surface and intracellular activation of LCK that phosphorylates the ITAM motifs of CD3G, CD3D, CD3E and CD247 enabling the recruitment of ZAP70. In turn, ZAP70 phosphorylates LAT, which recruits numerous signaling molecules to form the LAT signalosome. The LAT signalosome propagates signal branching to three major signaling pathways, the calcium, the mitogen-activated protein kinase (MAPK) kinase and the nuclear factor NF-kappa-B (NF-kB) pathways, leading to the mobilization of transcription factors that are critical for gene expression and essential for T cell growth and differentiation. The T cell repertoire is generated in the thymus, by V-(D)-J rearrangement. This repertoire is then shaped by intrathymic selection events to generate a peripheral T cell pool of self-MH restricted, non-autoaggressive T cells. Post-thymic interaction of alpha-beta TR with the pMH complexes shapes TR structural and functional avidity. This Homo sapiens (Human) protein is T cell receptor beta constant 1.